A 182-amino-acid polypeptide reads, in one-letter code: Large ribosomal subunit protein uL16 (182 aa).

The interval 140–182 is disordered; the sequence is EKPTQVGKAPPKSSFLPSDETETAAAQAGTEASSASSVTPLES. Positions 162–176 are enriched in low complexity; that stretch reads TAAAQAGTEASSASS.

It belongs to the universal ribosomal protein uL16 family. As to quaternary structure, part of the 50S ribosomal subunit.

Binds 23S rRNA and is also seen to make contacts with the A and possibly P site tRNAs. This chain is Large ribosomal subunit protein uL16, found in Prochlorococcus marinus (strain SARG / CCMP1375 / SS120).